A 170-amino-acid chain; its full sequence is Zinc finger protein 576 (170 aa).

Positions 1–29 (MEDPNPEENMKQQDSPKERSPQSPGGNIC) are disordered. The span at 8 to 20 (ENMKQQDSPKERS) shows a compositional bias: basic and acidic residues. 4 C2H2-type zinc fingers span residues 34 to 57 (PKCT…KREH), 71 to 93 (FICF…QRSH), 112 to 134 (FPCP…RQMH), and 143 to 165 (FACT…YIRH).

Belongs to the krueppel C2H2-type zinc-finger protein family.

It localises to the nucleus. Functionally, may be involved in transcriptional regulation. This chain is Zinc finger protein 576 (ZNF576), found in Homo sapiens (Human).